The chain runs to 135 residues: Flagellar assembly factor FliW 1 (135 aa).

Belongs to the FliW family. In terms of assembly, interacts with translational regulator CsrA and flagellin(s).

The protein localises to the cytoplasm. Its function is as follows. Acts as an anti-CsrA protein, binds CsrA and prevents it from repressing translation of its target genes, one of which is flagellin. Binds to flagellin and participates in the assembly of the flagellum. The protein is Flagellar assembly factor FliW 1 of Helicobacter pylori (strain HPAG1).